The sequence spans 460 residues: Hemopexin (460 aa).

The signal sequence occupies residues 1-23 (MARTVVALNILVLLGLCWSLAVA). N-linked (GlcNAc...) asparagine glycans are attached at residues Asn-38 and Asn-64. Cystine bridges form between Cys-50/Cys-230, Cys-148/Cys-153, and Cys-187/Cys-199. 4 Hemopexin repeats span residues 53–93 (AWSF…WKNP), 94–138 (VTSV…FPGI), 139–183 (PYPP…SWPA), and 184–230 (VGNC…FISC). Position 79 (His-79) interacts with heme. His-149 serves as a coordination point for heme. Asn-186 is a glycosylation site (N-linked (GlcNAc...) asparagine). His-235 is a heme binding site. Residues Asn-240 and Asn-246 are each glycosylated (N-linked (GlcNAc...) asparagine). 3 cysteine pairs are disulfide-bonded: Cys-255/Cys-458, Cys-364/Cys-406, and Cys-416/Cys-433. 4 Hemopexin repeats span residues 257–302 (ADPG…WPQG), 303–350 (PSAV…LGSP), 355–394 (LDTIDAAFSCPGSSKLYVTSGRRLWWLDLKSGAQATWAEL), and 398–448 (HEKV…SLPQ). His-291 contacts heme.

The protein belongs to the hemopexin family. In terms of tissue distribution, expressed by the liver and secreted in plasma.

It is found in the secreted. Its function is as follows. Binds heme and transports it to the liver for breakdown and iron recovery, after which the free hemopexin returns to the circulation. This Rattus norvegicus (Rat) protein is Hemopexin (Hpx).